The primary structure comprises 457 residues: tRNA-2-methylthio-N(6)-dimethylallyladenosine synthase (457 aa).

The 118-residue stretch at 2 to 119 folds into the MTTase N-terminal domain; it reads KKVFIKTFGC…LPELIDARRR (118 aa). Positions 11, 48, 82, 156, 160, and 163 each coordinate [4Fe-4S] cluster. In terms of domain architecture, Radical SAM core spans 142 to 375; it reads RVEGPSAFVS…QATIDANMAR (234 aa). Residues 378–448 form the TRAM domain; the sequence is EGMVGSVQRI…PHSLRGDVVE (71 aa).

This sequence belongs to the methylthiotransferase family. MiaB subfamily. In terms of assembly, monomer. [4Fe-4S] cluster serves as cofactor.

Its subcellular location is the cytoplasm. It carries out the reaction N(6)-dimethylallyladenosine(37) in tRNA + (sulfur carrier)-SH + AH2 + 2 S-adenosyl-L-methionine = 2-methylsulfanyl-N(6)-dimethylallyladenosine(37) in tRNA + (sulfur carrier)-H + 5'-deoxyadenosine + L-methionine + A + S-adenosyl-L-homocysteine + 2 H(+). Its function is as follows. Catalyzes the methylthiolation of N6-(dimethylallyl)adenosine (i(6)A), leading to the formation of 2-methylthio-N6-(dimethylallyl)adenosine (ms(2)i(6)A) at position 37 in tRNAs that read codons beginning with uridine. The protein is tRNA-2-methylthio-N(6)-dimethylallyladenosine synthase of Ralstonia nicotianae (strain ATCC BAA-1114 / GMI1000) (Ralstonia solanacearum).